The following is a 360-amino-acid chain: Phosphoserine aminotransferase (360 aa).

Arg42 provides a ligand contact to L-glutamate. Pyridoxal 5'-phosphate-binding positions include 76-77 (AR), Trp102, Thr153, Asp172, and Gln195. At Lys196 the chain carries N6-(pyridoxal phosphate)lysine. Pyridoxal 5'-phosphate is bound at residue 237 to 238 (NT).

It belongs to the class-V pyridoxal-phosphate-dependent aminotransferase family. SerC subfamily. As to quaternary structure, homodimer. Requires pyridoxal 5'-phosphate as cofactor.

It is found in the cytoplasm. It carries out the reaction O-phospho-L-serine + 2-oxoglutarate = 3-phosphooxypyruvate + L-glutamate. It catalyses the reaction 4-(phosphooxy)-L-threonine + 2-oxoglutarate = (R)-3-hydroxy-2-oxo-4-phosphooxybutanoate + L-glutamate. The protein operates within amino-acid biosynthesis; L-serine biosynthesis; L-serine from 3-phospho-D-glycerate: step 2/3. It participates in cofactor biosynthesis; pyridoxine 5'-phosphate biosynthesis; pyridoxine 5'-phosphate from D-erythrose 4-phosphate: step 3/5. Catalyzes the reversible conversion of 3-phosphohydroxypyruvate to phosphoserine and of 3-hydroxy-2-oxo-4-phosphonooxybutanoate to phosphohydroxythreonine. The chain is Phosphoserine aminotransferase from Aliivibrio fischeri (strain ATCC 700601 / ES114) (Vibrio fischeri).